A 260-amino-acid polypeptide reads, in one-letter code: 6-carboxyhexanoate--CoA ligase (260 aa).

It belongs to the BioW family. In terms of assembly, homodimer. It depends on Mg(2+) as a cofactor.

It catalyses the reaction heptanedioate + ATP + CoA = 6-carboxyhexanoyl-CoA + AMP + diphosphate. It functions in the pathway metabolic intermediate metabolism; pimeloyl-CoA biosynthesis; pimeloyl-CoA from pimelate: step 1/1. Functionally, catalyzes the transformation of pimelate into pimeloyl-CoA with concomitant hydrolysis of ATP to AMP. The chain is 6-carboxyhexanoate--CoA ligase from Fibrobacter succinogenes (strain ATCC 19169 / S85).